We begin with the raw amino-acid sequence, 338 residues long: Phenylalanine--tRNA ligase alpha subunit (338 aa).

A Mg(2+)-binding site is contributed by E252.

This sequence belongs to the class-II aminoacyl-tRNA synthetase family. Phe-tRNA synthetase alpha subunit type 1 subfamily. Tetramer of two alpha and two beta subunits. Mg(2+) is required as a cofactor.

The protein resides in the cytoplasm. The enzyme catalyses tRNA(Phe) + L-phenylalanine + ATP = L-phenylalanyl-tRNA(Phe) + AMP + diphosphate + H(+). This Pseudomonas entomophila (strain L48) protein is Phenylalanine--tRNA ligase alpha subunit.